The following is a 512-amino-acid chain: Cytochrome P450 76C2 (512 aa).

A helical membrane pass occupies residues Ile3–Phe23. Cys451 lines the heme pocket.

The protein belongs to the cytochrome P450 family. Requires heme as cofactor.

Its subcellular location is the membrane. This chain is Cytochrome P450 76C2 (CYP76C2), found in Arabidopsis thaliana (Mouse-ear cress).